We begin with the raw amino-acid sequence, 115 residues long: Immunoglobulin kappa variable 5-48 (115 aa).

The first 20 residues, 1–20 (MVSTPQFLVFLLFWIPASRG), serve as a signal peptide directing secretion. Residues 21 to 43 (DILLTQSPAILSVSPGERVSFSC) are framework-1. Cys-43 and Cys-108 are oxidised to a cystine. The tract at residues 44–54 (RASQSIGTSIH) is complementarity-determining-1. Positions 55–69 (WYQQRTNGSPRLLIK) are framework-2. Residues 70-76 (YASESIS) form a complementarity-determining-2 region. A framework-3 region spans residues 77–108 (GIPSRFSGSGSGTDFTLSINSVESEDIADYYC). The interval 109 to 115 (QQSNSWP) is complementarity-determining-3.

This Mus musculus (Mouse) protein is Immunoglobulin kappa variable 5-48.